An 85-amino-acid chain; its full sequence is U4-theraphotoxin-Hhn1a (85 aa).

The signal sequence occupies residues 1–22 (MKVTLIAILTCAAVLVLHTTAE). The propeptide occupies 23–48 (EELEAESQLMEVGMPDTELAAVDEER). 3 disulfide bridges follow: Cys-52–Cys-66, Cys-56–Cys-77, and Cys-71–Cys-82.

This sequence belongs to the neurotoxin 12 (Hwtx-2) family. 02 (Hwtx-2) subfamily. In terms of assembly, monomer. As to expression, expressed by the venom gland.

It is found in the secreted. Neurotoxin active on both insects and mammals. The chain is U4-theraphotoxin-Hhn1a from Cyriopagopus hainanus (Chinese bird spider).